The following is a 147-amino-acid chain: UPF0178 protein IL2341 (147 aa).

Belongs to the UPF0178 family.

The protein is UPF0178 protein IL2341 of Idiomarina loihiensis (strain ATCC BAA-735 / DSM 15497 / L2-TR).